Consider the following 171-residue polypeptide: MTAILITGYRSFEIGIFDHKDPRVSIIKQAIRKDLIGYLENGVDWFIFTGNLGFEQWALEVANELKEEYPLQIATIFLFETHGDKWNEKNQEVLSQFRAVDFVKYYFPNYEQPTQFSQYYQFLLEKTEGAYVFYDTENETNLKYFLKKAKDMPYYQLLLLTFDRLNDMSQS.

Belongs to the UPF0398 family.

This Streptococcus pyogenes serotype M2 (strain MGAS10270) protein is UPF0398 protein MGAS10270_Spy1470.